We begin with the raw amino-acid sequence, 677 residues long: DNA-directed RNA polymerase subunit beta' (677 aa).

Zn(2+) contacts are provided by Cys69, Cys71, Cys87, and Cys90. Mg(2+)-binding residues include Asp489, Asp491, and Asp493.

Belongs to the RNA polymerase beta' chain family. RpoC1 subfamily. As to quaternary structure, in plastids the minimal PEP RNA polymerase catalytic core is composed of four subunits: alpha, beta, beta', and beta''. When a (nuclear-encoded) sigma factor is associated with the core the holoenzyme is formed, which can initiate transcription. Mg(2+) is required as a cofactor. It depends on Zn(2+) as a cofactor.

It is found in the plastid. It localises to the chloroplast. It carries out the reaction RNA(n) + a ribonucleoside 5'-triphosphate = RNA(n+1) + diphosphate. Its function is as follows. DNA-dependent RNA polymerase catalyzes the transcription of DNA into RNA using the four ribonucleoside triphosphates as substrates. The sequence is that of DNA-directed RNA polymerase subunit beta' from Spinacia oleracea (Spinach).